The following is a 684-amino-acid chain: Fermitin family homolog 2 (684 aa).

An interaction with membranes containing phosphatidylinositol phosphate region spans residues 40-81 (HIGGVMLKLVEKLDVKKDWSDHALWWEKKKTWLLKTHWTLDK). Residues 141–163 (LRKPRDPKKKKKKLEDAEEETLE) form a disordered region. Positions 279 to 577 (DLNPKYDAIR…SLPEFGITHF (299 aa)) constitute an FERM domain. Residues 378-474 (KVFKPKKLTL…WMAACRLASK (97 aa)) form the PH domain. K381 contacts a 1,2-diacyl-sn-glycero-3-phospho-(1D-myo-inositol-3,4,5-trisphosphate).

Belongs to the kindlin family.

Its subcellular location is the cytoplasm. It localises to the cell cortex. The protein localises to the cytoskeleton. It is found in the stress fiber. The protein resides in the cell junction. Its subcellular location is the focal adhesion. It localises to the membrane. The protein localises to the cell projection. It is found in the lamellipodium membrane. The protein resides in the nucleus. Its subcellular location is the myofibril. It localises to the sarcomere. The protein localises to the i band. It is found in the cell surface. Its function is as follows. Scaffolding protein that enhances integrin activation mediated by TLN1 and/or TLN2, but activates integrins only weakly by itself. Binds to membranes enriched in phosphoinositides. Enhances integrin-mediated cell adhesion onto the extracellular matrix and cell spreading; this requires both its ability to interact with integrins and with phospholipid membranes. Required for the assembly of focal adhesions. Participates in the connection between extracellular matrix adhesion sites and the actin cytoskeleton and also in the orchestration of actin assembly and cell shape modulation. Plays a role in the TGFB1 and integrin signaling pathways. Stabilizes active CTNNB1 and plays a role in the regulation of transcription mediated by CTNNB1 and TCF7L2/TCF4 and in Wnt signaling. Required for normal embryonic development, including normal heart morphogenesis and normal angiogenesis. The sequence is that of Fermitin family homolog 2 (fermt2) from Danio rerio (Zebrafish).